A 485-amino-acid chain; its full sequence is Aspartyl/glutamyl-tRNA(Asn/Gln) amidotransferase subunit B (485 aa).

It belongs to the GatB/GatE family. GatB subfamily. As to quaternary structure, heterotrimer of A, B and C subunits.

It catalyses the reaction L-glutamyl-tRNA(Gln) + L-glutamine + ATP + H2O = L-glutaminyl-tRNA(Gln) + L-glutamate + ADP + phosphate + H(+). It carries out the reaction L-aspartyl-tRNA(Asn) + L-glutamine + ATP + H2O = L-asparaginyl-tRNA(Asn) + L-glutamate + ADP + phosphate + 2 H(+). Functionally, allows the formation of correctly charged Asn-tRNA(Asn) or Gln-tRNA(Gln) through the transamidation of misacylated Asp-tRNA(Asn) or Glu-tRNA(Gln) in organisms which lack either or both of asparaginyl-tRNA or glutaminyl-tRNA synthetases. The reaction takes place in the presence of glutamine and ATP through an activated phospho-Asp-tRNA(Asn) or phospho-Glu-tRNA(Gln). This Rhodospirillum rubrum (strain ATCC 11170 / ATH 1.1.1 / DSM 467 / LMG 4362 / NCIMB 8255 / S1) protein is Aspartyl/glutamyl-tRNA(Asn/Gln) amidotransferase subunit B.